A 266-amino-acid chain; its full sequence is MKAVVLTLAVLFLTGSQARHFWQQDEPQSPWDRVKDLATVYVDVVKDGGRDYVAQFEASALGKQLNLKLLDNWDSLSSTVAKLREQIGPVTQEFWDNLEKETEVLRQEMNKDLEEVKKKVQPYLDEFQSKWHEEVELYRQKVAPLGAELREGARQKLQELQEKLSPLGEELRDRARTHVDALRAQLAPYSEQLRERLAARLQALKEGGGAALTEYHAKASEHLSALREKAKPALEDLRQGLLPVLENFRDSLLAAVDEATKKLNSQ.

A signal peptide spans 1–18 (MKAVVLTLAVLFLTGSQA). A run of 2 repeats spans residues 67-88 (LKLLDNWDSLSSTVAKLREQIG) and 89-110 (PVTQEFWDNLEKETEVLRQEMN). The segment at 67 to 266 (LKLLDNWDSL…DEATKKLNSQ (200 aa)) is 10 X approximate tandem repeats. A Methionine sulfoxide modification is found at Met109. The stretch at 111 to 121 (KDLEEVKKKVQ) is one 3; half-length repeat. Tandem repeats lie at residues 122–143 (PYLDEFQSKWHEEVELYRQKVA), 144–165 (PLGAELREGARQKLQELQEKLS), 166–187 (PLGEELRDRARTHVDALRAQLA), 188–209 (PYSEQLRERLAARLQALKEGGG), and 210–231 (AALTEYHAKASEHLSALREKAK). A 9; half-length repeat occupies 232–242 (PALEDLRQGLL). Repeat unit 10 spans residues 243-266 (PVLENFRDSLLAAVDEATKKLNSQ).

This sequence belongs to the apolipoprotein A1/A4/E family. In terms of assembly, homodimer. Interacts with APOA1BP and CLU. Component of a sperm activating protein complex (SPAP), consisting of APOA1, an immunoglobulin heavy chain, an immunoglobulin light chain and albumin. Interacts with NDRG1. Interacts with SCGB3A2. Interacts with NAXE and YJEFN3. Post-translationally, glycosylated. Palmitoylated. In terms of processing, phosphorylation sites are present in the extracellular medium.

Its subcellular location is the secreted. Its function is as follows. Participates in the reverse transport of cholesterol from tissues to the liver for excretion by promoting cholesterol efflux from tissues and by acting as a cofactor for the lecithin cholesterol acyltransferase (LCAT). As part of the SPAP complex, activates spermatozoa motility. The sequence is that of Apolipoprotein A-I (APOA1) from Neomonachus schauinslandi (Hawaiian monk seal).